The chain runs to 234 residues: Ribonuclease HII (234 aa).

In terms of domain architecture, RNase H type-2 spans 16–207 (ALVAGVDEAG…VRRMLTPKAI (192 aa)). A divalent metal cation is bound by residues aspartate 22, glutamate 23, and aspartate 115.

Belongs to the RNase HII family. The cofactor is Mn(2+). It depends on Mg(2+) as a cofactor.

The protein resides in the cytoplasm. The catalysed reaction is Endonucleolytic cleavage to 5'-phosphomonoester.. In terms of biological role, endonuclease that specifically degrades the RNA of RNA-DNA hybrids. In Xylella fastidiosa (strain M12), this protein is Ribonuclease HII.